The chain runs to 500 residues: ATP synthase subunit alpha, sodium ion specific (500 aa).

169-176 (GDRQTGKT) is a binding site for ATP.

It belongs to the ATPase alpha/beta chains family. In terms of assembly, F-type ATPases have 2 components, CF(1) - the catalytic core - and CF(0) - the membrane proton channel. CF(1) has five subunits: alpha(3), beta(3), gamma(1), delta(1), epsilon(1). CF(0) has three main subunits: a, b and c.

The protein resides in the cell membrane. The catalysed reaction is 4 Na(+)(in) + ATP + H2O = 4 Na(+)(out) + ADP + phosphate + H(+). Functionally, produces ATP from ADP in the presence of a sodium ion gradient across the membrane. The alpha chain is a regulatory subunit. This chain is ATP synthase subunit alpha, sodium ion specific, found in Propionigenium modestum.